Reading from the N-terminus, the 117-residue chain is Large ribosomal subunit protein bL17 (117 aa).

It belongs to the bacterial ribosomal protein bL17 family. As to quaternary structure, part of the 50S ribosomal subunit. Contacts protein L32.

This is Large ribosomal subunit protein bL17 from Endomicrobium trichonymphae.